Here is a 177-residue protein sequence, read N- to C-terminus: Interleukin-1 receptor antagonist protein (177 aa).

Positions 1–25 are cleaved as a signal peptide; that stretch reads MEVSRYLCSYLISFLLFLFHSETAC. A disulfide bond links Cys91 and Cys141. Asn109 carries an N-linked (GlcNAc...) asparagine glycan.

The protein belongs to the IL-1 family.

It is found in the secreted. Functionally, anti-inflammatory antagonist of interleukin-1 family of proinflammatory cytokines such as interleukin-1beta/IL1B and interleukin-1alpha/IL1A. Protects from immune dysregulation and uncontrolled systemic inflammation triggered by IL1 for a range of innate stimulatory agents such as pathogens. The chain is Interleukin-1 receptor antagonist protein (IL1RN) from Sus scrofa (Pig).